Here is a 98-residue protein sequence, read N- to C-terminus: Putative pterin-4-alpha-carbinolamine dehydratase (98 aa).

The protein belongs to the pterin-4-alpha-carbinolamine dehydratase family.

The enzyme catalyses (4aS,6R)-4a-hydroxy-L-erythro-5,6,7,8-tetrahydrobiopterin = (6R)-L-erythro-6,7-dihydrobiopterin + H2O. This chain is Putative pterin-4-alpha-carbinolamine dehydratase, found in Parasynechococcus marenigrum (strain WH8102).